The chain runs to 618 residues: Nuclear RNA export factor 1 (618 aa).

Residues 1-15 (MADEGKSYNEHDDRV) show a composition bias toward basic and acidic residues. The disordered stretch occupies residues 1-113 (MADEGKSYNE…RGGAGTSQDG (113 aa)). The residue at position 2 (Ala-2) is an N-acetylalanine. The tract at residues 2 to 59 (ADEGKSYNEHDDRVSFPQRRKKGRGPFRWKCGVGNRRSGRGGSGIRSSRFEEDDGDVA) is minor non-specific RNA-binding. The RNA-binding (RBD) stretch occupies residues 2–117 (ADEGKSYNEH…GTSQDGTTKN (116 aa)). Residues 2–197 (ADEGKSYNEH…IIINSSAPPY (196 aa)) are interaction with ALYREF/THOC4 and LUZP4. Basic residues predominate over residues 19 to 28 (QRRKKGRGPF). Arg-41 carries the post-translational modification Asymmetric dimethylarginine; alternate. Residue Arg-41 is modified to Omega-N-methylarginine; alternate. A major non-specific RNA-binding region spans residues 60–117 (MNDPQDGPRVRFNPYTTRPNRRRDTWHDRDRIHVTVRRDRAPQERGGAGTSQDGTTKN). The segment at 60–117 (MNDPQDGPRVRFNPYTTRPNRRRDTWHDRDRIHVTVRRDRAPQERGGAGTSQDGTTKN) is RNA binding. The Nuclear localization signal signature appears at 66 to 99 (GPRVRFNPYTTRPNRRRDTWHDRDRIHVTVRRDR). The segment covering 81–102 (RRDTWHDRDRIHVTVRRDRAPQ) has biased composition (basic and acidic residues). A Nuclear export signal motif is present at residues 82 to 109 (RDTWHDRDRIHVTVRRDRAPQERGGAGT). The RRM domain maps to 118–197 (WFKITIPYGK…IIINSSAPPY (80 aa)). At Tyr-125 the chain carries 3'-nitrotyrosine. LRR repeat units follow at residues 265-290 (ELLS…QKAP), 291-314 (NLKI…IKGL), 315-342 (KLEE…TIRE), and 343-370 (RFPK…TMLP). The NTF2 domain maps to 385–535 (LVLHFLQQYY…LCIVNDELFV (151 aa)). Positions 564-618 (QEQQDMLQAFSTQSGMNLEWSQKCLQDNNWDYTRSAQAFTHLKAKGEIPEVAFMK) constitute a TAP-C domain.

This sequence belongs to the NXF family. As to quaternary structure, heterodimer (via NTF2 domain) with NXT1. The formation of NXF1-NXT1 heterodimers is required for the NXF1-mediated nuclear mRNA export. Forms a complex with RANBP2/NUP358, NXT1 and RANGAP1. Associates with the exon junction complex (EJC). Associates with the transcription/export (TREX) complex. Found in a mRNA complex with UPF3A and UPF3B. Found in a post-splicing complex with RBM8A, UPF1, UPF2, UPF3A, UPF3B and RNPS1. Interacts (via N-terminus) with DHX9 (via N-terminus); this interaction is direct and negatively regulates NXF1-mediated nuclear export of constitutive transport element (CTE)-containing cellular mRNAs. Interacts with FYTTD1/UIF. Interacts with EIF4A3. Interacts with NUP42. Interacts with ALYREF/THOC4. Interacts with CHTOP. Interacts with FRG1 (via N-terminus). Interacts with LUZP4. Interacts with FMR1; the interaction occurs in a mRNA-dependent and polyribosomes-independent manner in the nucleus. Interacts with CPSF6 (via N-terminus); this interaction is direct. Interacts with RBM15. Interacts with RBM15B. Interacts with MCM3AP; this interaction is not mediated by RNA. Interacts with DDX3X (via C-terminus); this interaction may be partly involved in DDX3X nuclear export and in NXF1 localization to stress granules. Interacts with PABPC1/PABP1.

The protein localises to the nucleus. Its subcellular location is the nucleoplasm. The protein resides in the nucleus speckle. It is found in the nuclear pore complex. It localises to the nucleus envelope. The protein localises to the cytoplasm. Its subcellular location is the stress granule. Functionally, involved in the nuclear export of mRNA species bearing retroviral constitutive transport elements (CTE) and in the export of mRNA from the nucleus to the cytoplasm (TAP/NFX1 pathway). The NXF1-NXT1 heterodimer is involved in the export of HSP70 mRNA in conjunction with ALYREF/THOC4 and THOC5 components of the TREX complex. ALYREF/THOC4-bound mRNA is thought to be transferred to the NXF1-NXT1 heterodimer for export. Also involved in nuclear export of m6A-containing mRNAs: interaction between SRSF3 and YTHDC1 facilitates m6A-containing mRNA-binding to both SRSF3 and NXF1, promoting mRNA nuclear export. The protein is Nuclear RNA export factor 1 (Nxf1) of Rattus norvegicus (Rat).